A 107-amino-acid chain; its full sequence is ATP synthase subunit c (107 aa).

A run of 3 helical transmembrane segments spans residues 4 to 24 (IVFLMLALSGFAFAAEGSMNQ), 29 to 49 (FSILAAGLGLGVAALGGAIGM), and 74 to 94 (MFIALAMIEAQVIYALVIALI).

Belongs to the ATPase C chain family. F-type ATPases have 2 components, F(1) - the catalytic core - and F(0) - the membrane proton channel. F(1) has five subunits: alpha(3), beta(3), gamma(1), delta(1), epsilon(1). F(0) has three main subunits: a(1), b(2) and c(10-14). The alpha and beta chains form an alternating ring which encloses part of the gamma chain. F(1) is attached to F(0) by a central stalk formed by the gamma and epsilon chains, while a peripheral stalk is formed by the delta and b chains.

The protein resides in the cell inner membrane. In terms of biological role, f(1)F(0) ATP synthase produces ATP from ADP in the presence of a proton or sodium gradient. F-type ATPases consist of two structural domains, F(1) containing the extramembraneous catalytic core and F(0) containing the membrane proton channel, linked together by a central stalk and a peripheral stalk. During catalysis, ATP synthesis in the catalytic domain of F(1) is coupled via a rotary mechanism of the central stalk subunits to proton translocation. Functionally, key component of the F(0) channel; it plays a direct role in translocation across the membrane. A homomeric c-ring of between 10-14 subunits forms the central stalk rotor element with the F(1) delta and epsilon subunits. This is ATP synthase subunit c from Campylobacter lari (strain RM2100 / D67 / ATCC BAA-1060).